The following is a 130-amino-acid chain: Small ribosomal subunit protein uS8 (130 aa).

It belongs to the universal ribosomal protein uS8 family. Part of the 30S ribosomal subunit. Contacts proteins S5 and S12.

Functionally, one of the primary rRNA binding proteins, it binds directly to 16S rRNA central domain where it helps coordinate assembly of the platform of the 30S subunit. The chain is Small ribosomal subunit protein uS8 from Pseudomonas putida (strain ATCC 700007 / DSM 6899 / JCM 31910 / BCRC 17059 / LMG 24140 / F1).